The following is an 89-amino-acid chain: Luqin-like RYamide peptides lury-1 (89 aa).

Positions 1–19 (MLTRVPVLILAVIVMLALC) are cleaved as a signal peptide. The propeptide occupies 20-26 (QEPEKPE). 2 positions are modified to tyrosine amide: Tyr35 and Tyr43. Residues 47-89 (SGNLMESSQNSLTEESSDVVCQLIDGKYICLPVDAVRFRPFFL) constitute a propeptide that is removed on maturation.

As to expression, expressed in the M1 and M2 pharyngeal neurons from where the LURY-1-1 and LURY-1-2 peptides are secreted.

The protein localises to the secreted. In terms of biological role, acts as a ligand for the npr-22 receptor and controls food-related processes including feeding, lifespan, egg-laying and roaming behavior. Secreted in the presence of food, leading to reduced feeding and roaming behavior and increased egg laying and lifespan. Activity may be latent under normal conditions but induced under conditions that cause hyperactivation of the pharynx such as abrupt refeeding after starvation. The polypeptide is Luqin-like RYamide peptides lury-1 (Caenorhabditis elegans).